The primary structure comprises 203 residues: Large ribosomal subunit protein bL25 (203 aa).

It belongs to the bacterial ribosomal protein bL25 family. CTC subfamily. In terms of assembly, part of the 50S ribosomal subunit; part of the 5S rRNA/L5/L18/L25 subcomplex. Contacts the 5S rRNA. Binds to the 5S rRNA independently of L5 and L18.

Its function is as follows. This is one of the proteins that binds to the 5S RNA in the ribosome where it forms part of the central protuberance. This chain is Large ribosomal subunit protein bL25, found in Rickettsia prowazekii (strain Madrid E).